The primary structure comprises 538 residues: CTP synthase (538 aa).

Residues 1–270 (MSRTKFIFVT…DEVVLKTMGM (270 aa)) are amidoligase domain. S15 contributes to the CTP binding site. A UTP-binding site is contributed by S15. ATP is bound at residue 16–21 (SLGKGV). Y56 serves as a coordination point for L-glutamine. Residue D73 participates in ATP binding. Mg(2+) is bound by residues D73 and E143. Residues 150 to 152 (DIE), 190 to 195 (KTKPTQ), and K226 contribute to the CTP site. UTP contacts are provided by residues 190–195 (KTKPTQ) and K226. Positions 295-537 (QIAVVGKYIS…IRASVKYSKK (243 aa)) constitute a Glutamine amidotransferase type-1 domain. G357 provides a ligand contact to L-glutamine. The Nucleophile; for glutamine hydrolysis role is filled by C384. L-glutamine contacts are provided by residues 385 to 388 (LGMQ), E408, and R465. Catalysis depends on residues H510 and E512.

Belongs to the CTP synthase family. As to quaternary structure, homotetramer.

It catalyses the reaction UTP + L-glutamine + ATP + H2O = CTP + L-glutamate + ADP + phosphate + 2 H(+). The catalysed reaction is L-glutamine + H2O = L-glutamate + NH4(+). It carries out the reaction UTP + NH4(+) + ATP = CTP + ADP + phosphate + 2 H(+). The protein operates within pyrimidine metabolism; CTP biosynthesis via de novo pathway; CTP from UDP: step 2/2. Its activity is regulated as follows. Allosterically activated by GTP, when glutamine is the substrate; GTP has no effect on the reaction when ammonia is the substrate. The allosteric effector GTP functions by stabilizing the protein conformation that binds the tetrahedral intermediate(s) formed during glutamine hydrolysis. Inhibited by the product CTP, via allosteric rather than competitive inhibition. Its function is as follows. Catalyzes the ATP-dependent amination of UTP to CTP with either L-glutamine or ammonia as the source of nitrogen. Regulates intracellular CTP levels through interactions with the four ribonucleotide triphosphates. The chain is CTP synthase from Leptospira interrogans serogroup Icterohaemorrhagiae serovar copenhageni (strain Fiocruz L1-130).